The sequence spans 235 residues: Small ribosomal subunit protein uS2c (235 aa).

Belongs to the universal ribosomal protein uS2 family.

It is found in the plastid. The protein resides in the chloroplast. The protein is Small ribosomal subunit protein uS2c (rps2) of Cryptomeria japonica (Japanese cedar).